Here is a 229-residue protein sequence, read N- to C-terminus: MANELTWHDVLAEEKQQPYFLNTLQTVASERQSGVTIYPPQKDVFNAFRFTELGDVKVVILGQDPYHGPGQAHGLAFSVRPGIATPPSLLNMYKELENTIPGFTRPNHGYLESWARQGVLLLNTVLTVRAGQAHSHASLGWETFTDKVISLINQHREGVVFLLWGSHAQKKGAIIDKQRHHVLKAPHPSPLSAHRGFFGCNHFVLANQWLEQHGETPIDWMPVLPAESE.

Asp-64 (proton acceptor) is an active-site residue.

The protein belongs to the uracil-DNA glycosylase (UDG) superfamily. UNG family. Monomer.

The protein resides in the cytoplasm. It catalyses the reaction Hydrolyzes single-stranded DNA or mismatched double-stranded DNA and polynucleotides, releasing free uracil.. Functionally, excises uracil residues from the DNA which can arise as a result of misincorporation of dUMP residues by DNA polymerase or due to deamination of cytosine. The protein is Uracil-DNA glycosylase of Escherichia coli O157:H7.